Reading from the N-terminus, the 117-residue chain is Ubiquitin-like protein 3 (117 aa).

The Ubiquitin-like domain occupies 10-88; it reads INLRLILVSG…PFGKTTVMHL (79 aa). C113 carries S-palmitoyl cysteine lipidation. C114 is subject to Cysteine methyl ester. C114 carries the S-geranylgeranyl cysteine lipid modification. A propeptide spans 115-117 (removed in mature form); the sequence is VIL.

Its subcellular location is the cell membrane. The protein is Ubiquitin-like protein 3 (UBL3) of Bos taurus (Bovine).